A 276-amino-acid chain; its full sequence is NADPH-dependent 7-cyano-7-deazaguanine reductase (276 aa).

I83–S85 provides a ligand contact to substrate. An NADPH-binding site is contributed by S85–K86. Residue C184 is the Thioimide intermediate of the active site. Residue D191 is the Proton donor of the active site. Residue H223–E224 participates in substrate binding. R252 to G253 is a binding site for NADPH.

Belongs to the GTP cyclohydrolase I family. QueF type 2 subfamily. Homodimer.

The protein resides in the cytoplasm. The enzyme catalyses 7-aminomethyl-7-carbaguanine + 2 NADP(+) = 7-cyano-7-deazaguanine + 2 NADPH + 3 H(+). Its pathway is tRNA modification; tRNA-queuosine biosynthesis. In terms of biological role, catalyzes the NADPH-dependent reduction of 7-cyano-7-deazaguanine (preQ0) to 7-aminomethyl-7-deazaguanine (preQ1). This Pseudomonas fluorescens (strain SBW25) protein is NADPH-dependent 7-cyano-7-deazaguanine reductase.